We begin with the raw amino-acid sequence, 71 residues long: MGIVKKILRMTGLEKHDYVRYMGKNYKCLKCGHDLYIPKHNEFHYTVKEFRGCKGEQRMKKVKRHRNGGYA.

This is an uncharacterized protein from Bacillus phage SPP1 (Bacteriophage SPP1).